A 616-amino-acid chain; its full sequence is Dihydroxy-acid dehydratase (616 aa).

Aspartate 81 contacts Mg(2+). Cysteine 122 serves as a coordination point for [2Fe-2S] cluster. Mg(2+) contacts are provided by aspartate 123 and lysine 124. Residue lysine 124 is modified to N6-carboxylysine. Cysteine 195 serves as a coordination point for [2Fe-2S] cluster. Residue glutamate 491 participates in Mg(2+) binding. Residue serine 517 is the Proton acceptor of the active site.

Belongs to the IlvD/Edd family. As to quaternary structure, homodimer. It depends on [2Fe-2S] cluster as a cofactor. Mg(2+) serves as cofactor.

It carries out the reaction (2R)-2,3-dihydroxy-3-methylbutanoate = 3-methyl-2-oxobutanoate + H2O. The enzyme catalyses (2R,3R)-2,3-dihydroxy-3-methylpentanoate = (S)-3-methyl-2-oxopentanoate + H2O. The protein operates within amino-acid biosynthesis; L-isoleucine biosynthesis; L-isoleucine from 2-oxobutanoate: step 3/4. It participates in amino-acid biosynthesis; L-valine biosynthesis; L-valine from pyruvate: step 3/4. Functionally, functions in the biosynthesis of branched-chain amino acids. Catalyzes the dehydration of (2R,3R)-2,3-dihydroxy-3-methylpentanoate (2,3-dihydroxy-3-methylvalerate) into 2-oxo-3-methylpentanoate (2-oxo-3-methylvalerate) and of (2R)-2,3-dihydroxy-3-methylbutanoate (2,3-dihydroxyisovalerate) into 2-oxo-3-methylbutanoate (2-oxoisovalerate), the penultimate precursor to L-isoleucine and L-valine, respectively. This Escherichia fergusonii (strain ATCC 35469 / DSM 13698 / CCUG 18766 / IAM 14443 / JCM 21226 / LMG 7866 / NBRC 102419 / NCTC 12128 / CDC 0568-73) protein is Dihydroxy-acid dehydratase.